Consider the following 92-residue polypeptide: MSKVCIIAWIYGRVQGVGFRYTTQYEAKKLGLTGYAKNLDDGSVEVVACGDEGQVEKLIQWLKSGGPRSARVERVLSEPHHPSGELTDFRIR.

C5 and C49 form a disulfide bridge. One can recognise an Acylphosphatase-like domain in the interval 5 to 92; it reads CIIAWIYGRV…SGELTDFRIR (88 aa). Residues R20 and N38 contribute to the active site.

It belongs to the acylphosphatase family.

It catalyses the reaction an acyl phosphate + H2O = a carboxylate + phosphate + H(+). This Escherichia coli O1:K1 / APEC protein is Acylphosphatase.